A 582-amino-acid polypeptide reads, in one-letter code: uncharacterized protein (582 aa).

12 consecutive transmembrane segments (helical) span residues 29-49 (LFIV…FAAL), 117-137 (ISAP…MGLA), 155-175 (VWAT…MIIV), 225-245 (YVYI…YFLL), 254-274 (FISI…YLLI), 287-307 (ATVI…IVLI), 329-349 (YLYL…ALSV), 376-396 (SIFG…WGLI), 432-452 (IVYL…LFNI), 458-478 (LVVS…IALS), 491-511 (IGMA…PVFF), and 523-543 (IYLY…GNWI).

It localises to the cell membrane. This is an uncharacterized protein from Mycoplasmoides gallisepticum (strain R(low / passage 15 / clone 2)) (Mycoplasma gallisepticum).